We begin with the raw amino-acid sequence, 190 residues long: Translation initiation factor IF-3 (190 aa).

It belongs to the IF-3 family. As to quaternary structure, monomer.

Its subcellular location is the cytoplasm. In terms of biological role, IF-3 binds to the 30S ribosomal subunit and shifts the equilibrium between 70S ribosomes and their 50S and 30S subunits in favor of the free subunits, thus enhancing the availability of 30S subunits on which protein synthesis initiation begins. This is Translation initiation factor IF-3 from Prochlorococcus marinus subsp. pastoris (strain CCMP1986 / NIES-2087 / MED4).